We begin with the raw amino-acid sequence, 132 residues long: Acid shock protein (132 aa).

The N-terminal stretch at 1 to 21 is a signal peptide; the sequence is MKKVLALVVAAAMGLSSAAFA. The segment covering 20-45 has biased composition (low complexity); sequence FAAETTTSSAAPATATATTTKAAPAK. Residues 20–132 are disordered; the sequence is FAAETTTSSA…AAKPAAQPAA (113 aa). A propeptide spanning residues 22-90 is cleaved from the precursor; it reads AETTTSSAAP…TTAPVEQKAQ (69 aa). Residues 62-71 show a composition bias toward basic residues; it reads AAKKHHKKAV. Composition is skewed to low complexity over residues 76–90 and 100–109; these read AAPATTTAPVEQKAQ and AKPAVAQKAQ. Residues 110 to 119 are compositionally biased toward basic residues; sequence AAKKHHKKAV.

The protein belongs to the Asr family. Proteolytic processing gives rise to the active protein.

It localises to the periplasm. Functionally, required for growth and/or survival at acidic conditions. The polypeptide is Acid shock protein (Enterobacter sp. (strain 638)).